Here is a 928-residue protein sequence, read N- to C-terminus: ATP-dependent DNA helicase PIF5 (928 aa).

The transit peptide at Met-1 to Ser-49 directs the protein to the mitochondrion. Disordered stretches follow at residues Arg-29–Ile-141 and Leu-176–Ala-231. A compositionally biased stretch (basic and acidic residues) spans Ala-52–Gly-61. Gly-264–Ser-271 contributes to the ATP binding site. Disordered regions lie at residues Pro-389–Lys-421, Lys-481–Glu-513, Ile-545–Met-572, and Ser-585–Trp-607. Residues Asn-550 to Val-566 are compositionally biased toward polar residues. The DNA-binding element occupies Gln-858–Phe-877. The tract at residues Glu-898–Glu-928 is disordered.

The protein belongs to the helicase family. PIF1 subfamily. As to quaternary structure, monomer. Mg(2+) serves as cofactor.

It is found in the mitochondrion. The enzyme catalyses Couples ATP hydrolysis with the unwinding of duplex DNA at the replication fork by translocating in the 5'-3' direction. This creates two antiparallel DNA single strands (ssDNA). The leading ssDNA polymer is the template for DNA polymerase III holoenzyme which synthesizes a continuous strand.. It catalyses the reaction ATP + H2O = ADP + phosphate + H(+). Its function is as follows. DNA-dependent ATPase and 5'-3' DNA helicase required for the maintenance of mitochondrial (kinetoplast) genome stability. Involved in processing of minicircle Okazaki fragments. This Trypanosoma brucei brucei (strain 927/4 GUTat10.1) protein is ATP-dependent DNA helicase PIF5.